We begin with the raw amino-acid sequence, 287 residues long: Prohibitin-1 (287 aa).

The interaction with ATG8 stretch occupies residues 102–116 (VLQLPAIYQNLGLDY). The AIM motif lies at 109–112 (YQNL). A coiled-coil region spans residues 180-224 (EFTKAVEQKQIAQQDAERAKFLVEKAEQERQASVIRAEGEAESAE). The disordered stretch occupies residues 264-287 (SQHSGGGNSESSGSPNSLLLNIGR). Low complexity predominate over residues 272 to 287 (SESSGSPNSLLLNIGR).

Belongs to the prohibitin family. In terms of assembly, the mitochondrial prohibitin complex consists of two subunits (PHB1 and PHB2). The subunits assemble into a membrane-associated ring-shaped supercomplex of approximately 1 mDa. The mitochondrial prohibitin complex interacts with the m-AAA protease, a heterohexamer composed of YTA12/RCA1 and YTA10/AFG3. The mitochondrial prohibitin complex interacts with ATG8 and the interaction may support mitophagosome assembly. Post-translationally, the N-terminus is blocked.

The protein localises to the mitochondrion inner membrane. Functionally, prohibitin probably acts as a holdase/unfoldase for the stabilization of newly synthesized mitochondrial proteins. Involved in mitophagy; may act as an adapter for ATG8 that supports mitophagosome assembly. Negatively regulates the proteolytic processing of ATG32 via the i-AAA protease. Acts as a negative regulator of the m-AAA protease. The chain is Prohibitin-1 (PHB1) from Saccharomyces cerevisiae (strain ATCC 204508 / S288c) (Baker's yeast).